The chain runs to 109 residues: N-cym protein (109 aa).

In terms of assembly, interacts with MYCN and GSK3B. In terms of tissue distribution, expressed in the neuronal cells of the cerebrum and cerebellum, spermatocytes of the testis, pancreatic cells and also the heart. Expressed in both primary and metastatic neuroblastomas and in thyroid tumors (at protein level). Expression is associated with poor prognosis in neuroblastoma. Expressed in the fetal brain, lung, liver and kidney at varying low levels.

Its subcellular location is the cytoplasm. It is found in the nucleus. Regulates stability of MYCN in neuroblastoma cells by inhibiting GSK3B-mediated MYCN phosphorylation. Inhibits GSK3B activity by promoting its phosphorylation at 'Ser-9'. The chain is N-cym protein (MYCNOS) from Homo sapiens (Human).